The following is a 533-amino-acid chain: Sterol 26-hydroxylase, mitochondrial (533 aa).

A mitochondrion-targeting transit peptide spans 1 to 32 (MAAWSRTRLRWTLLDPRVVGRGLCPQGARAKA). The disordered stretch occupies residues 34–60 (IPAALQAQESTEGPGTGQDRPRLRSPA). N6-acetyllysine is present on residues K142, K232, K285, K296, and K375. The sterol-binding stretch occupies residues 386–400 (PLLKAVIKETLRLYP). C479 provides a ligand contact to heme. K512 and K523 each carry N6-acetyllysine.

Belongs to the cytochrome P450 family. Interacts with HSP70; this interaction is required for initial targeting to mitochondria. Heme is required as a cofactor. In terms of processing, acetylation of Lys-125 and Lys-285 is observed in liver mitochondria from fasted mice but not from fed mice. Expressed in the gray and white matter of cerebellum (at protein level).

The protein resides in the mitochondrion inner membrane. The enzyme catalyses 5beta-cholestane-3alpha,7alpha,12alpha-triol + 6 reduced [adrenodoxin] + 3 O2 + 5 H(+) = (25R)-3alpha,7alpha,12alpha-trihydroxy-5beta-cholestan-26-oate + 6 oxidized [adrenodoxin] + 4 H2O. The catalysed reaction is cholestanol + 2 reduced [adrenodoxin] + O2 + 2 H(+) = (25R)-26-hydroxycholestanol + 2 oxidized [adrenodoxin] + H2O. It catalyses the reaction (25R)-3beta-hydroxycholest-5-en-7-one-26-al + 2 reduced [adrenodoxin] + O2 + H(+) = (25R)-3beta-hydroxycholest-5-en-7-one-26-oate + 2 oxidized [adrenodoxin] + H2O. It carries out the reaction (25R)-3beta,26-dihydroxycholest-5-en-7-one + 2 reduced [adrenodoxin] + O2 + 2 H(+) = (25R)-3beta-hydroxycholest-5-en-7-one-26-al + 2 oxidized [adrenodoxin] + 2 H2O. The enzyme catalyses 7-oxocholesterol + 2 reduced [adrenodoxin] + O2 + 2 H(+) = (25R)-3beta,26-dihydroxycholest-5-en-7-one + 2 oxidized [adrenodoxin] + H2O. The catalysed reaction is calciol + 2 reduced [adrenodoxin] + O2 + 2 H(+) = calcidiol + 2 oxidized [adrenodoxin] + H2O. It catalyses the reaction (25R)-5beta-cholestane-3alpha,7alpha,12alpha,26-tetrol + 2 reduced [adrenodoxin] + O2 + 2 H(+) = (25R)-3alpha,7alpha,12alpha-trihydroxy-5beta-cholestan-26-al + 2 oxidized [adrenodoxin] + 2 H2O. It carries out the reaction 2 reduced [adrenodoxin] + cholesterol + O2 + 2 H(+) = (25R)-cholest-5-ene-3beta,26-diol + 2 oxidized [adrenodoxin] + H2O. The enzyme catalyses (25R)-3beta,4beta-dihydroxycholest-5-en-26-al + 2 reduced [adrenodoxin] + O2 + H(+) = (25R)-3beta,4beta-dihydroxycholest-5-en-26-oate + 2 oxidized [adrenodoxin] + H2O. The catalysed reaction is (25R)-4beta,26-dihydroxycholesterol + 2 reduced [adrenodoxin] + O2 + 2 H(+) = (25R)-3beta,4beta-dihydroxycholest-5-en-26-al + 2 oxidized [adrenodoxin] + 2 H2O. It catalyses the reaction 4beta-hydroxycholesterol + 2 reduced [adrenodoxin] + O2 + 2 H(+) = (25R)-4beta,26-dihydroxycholesterol + 2 oxidized [adrenodoxin] + H2O. It carries out the reaction (25R)-3beta-hydroxy-5-cholesten-26-al + 2 reduced [adrenodoxin] + O2 + H(+) = (25R)-3beta-hydroxy-5-cholestenoate + 2 oxidized [adrenodoxin] + H2O. The enzyme catalyses (25R)-cholest-5-ene-3beta,26-diol + 2 reduced [adrenodoxin] + O2 + 2 H(+) = (25R)-3beta-hydroxy-5-cholesten-26-al + 2 oxidized [adrenodoxin] + 2 H2O. The catalysed reaction is (25R)-3alpha,7alpha,12alpha-trihydroxy-5beta-cholestan-26-al + 2 reduced [adrenodoxin] + O2 + H(+) = (25R)-3alpha,7alpha,12alpha-trihydroxy-5beta-cholestan-26-oate + 2 oxidized [adrenodoxin] + H2O. It catalyses the reaction 5beta-cholestane-3alpha,7alpha,12alpha-triol + 2 reduced [adrenodoxin] + O2 + 2 H(+) = (25R)-5beta-cholestane-3alpha,7alpha,12alpha,26-tetrol + 2 oxidized [adrenodoxin] + H2O. It participates in hormone biosynthesis; cholecalciferol biosynthesis. The protein operates within steroid metabolism; cholesterol degradation. Its pathway is lipid metabolism; bile acid biosynthesis. Cytochrome P450 monooxygenase that catalyzes regio- and stereospecific hydroxylation of cholesterol and its derivatives. Hydroxylates (with R stereochemistry) the terminal methyl group of cholesterol side-chain in a three step reaction to yield at first a C26 alcohol, then a C26 aldehyde and finally a C26 acid. Regulates cholesterol homeostasis by catalyzing the conversion of excess cholesterol to bile acids via both the 'neutral' (classic) and the 'acid' (alternative) pathways. May also regulate cholesterol homeostasis via generation of active oxysterols, which act as ligands for NR1H2 and NR1H3 nuclear receptors, modulating the transcription of genes involved in lipid metabolism. Plays a role in cholestanol metabolism in the cerebellum. Similarly to cholesterol, hydroxylates cholestanol and may facilitate sterol diffusion through the blood-brain barrier to the systemic circulation for further degradation. Also hydroxylates retinal 7-ketocholesterol, a noxious oxysterol with pro-inflammatory and pro-apoptotic effects, and may play a role in its elimination from the retinal pigment epithelium. May play a redundant role in vitamin D biosynthesis. Catalyzes 25-hydroxylation of vitamin D3 that is required for its conversion to a functionally active form. In Mus musculus (Mouse), this protein is Sterol 26-hydroxylase, mitochondrial.